The sequence spans 127 residues: Major sperm protein 10/36/56/76 (127 aa).

At Ala-2 the chain carries N-acetylalanine. An MSP domain is found at 9–126 (DIQTQPNAKI…RRKNLPIEYN (118 aa)).

As to expression, sperm.

It localises to the cell projection. The protein resides in the pseudopodium. Its subcellular location is the cytoplasm. It is found in the cytoskeleton. Functionally, central component in molecular interactions underlying sperm crawling. Forms an extensive filament system that extends from sperm villipoda, along the leading edge of the pseudopod. The protein is Major sperm protein 10/36/56/76 (msp-10) of Caenorhabditis elegans.